Here is a 509-residue protein sequence, read N- to C-terminus: tRNA-2-methylthio-N(6)-dimethylallyladenosine synthase (509 aa).

The tract at residues 1–21 (MNEKQKLESGQVHPSDKKSEK) is disordered. Residues 66–184 (RKFYIRTYGC…LPELLSEAYL (119 aa)) form the MTTase N-terminal domain. Cys-75, Cys-111, Cys-145, Cys-221, Cys-225, and Cys-228 together coordinate [4Fe-4S] cluster. The Radical SAM core domain occupies 207–437 (RNGKIKGWVN…NALVNEISAK (231 aa)). The TRAM domain maps to 440-503 (KEYEGKVVEV…TWSLDGEMVG (64 aa)).

It belongs to the methylthiotransferase family. MiaB subfamily. Monomer. Requires [4Fe-4S] cluster as cofactor.

It is found in the cytoplasm. The catalysed reaction is N(6)-dimethylallyladenosine(37) in tRNA + (sulfur carrier)-SH + AH2 + 2 S-adenosyl-L-methionine = 2-methylsulfanyl-N(6)-dimethylallyladenosine(37) in tRNA + (sulfur carrier)-H + 5'-deoxyadenosine + L-methionine + A + S-adenosyl-L-homocysteine + 2 H(+). It carries out the reaction N(6)-dimethylallyladenosine(37) in tRNA + (sulfur carrier)-SH + AH2 + S-adenosyl-L-methionine = 2-thio-N(6)-dimethylallyladenosine(37) in tRNA + (sulfur carrier)-H + 5'-deoxyadenosine + L-methionine + A + H(+). It catalyses the reaction 2-thio-N(6)-dimethylallyladenosine(37) in tRNA + S-adenosyl-L-methionine = 2-methylsulfanyl-N(6)-dimethylallyladenosine(37) in tRNA + S-adenosyl-L-homocysteine + H(+). In terms of biological role, catalyzes the methylthiolation of N6-(dimethylallyl)adenosine (i(6)A), leading to the formation of 2-methylthio-N6-(dimethylallyl)adenosine (ms(2)i(6)A) at position 37 in tRNAs that read codons beginning with uridine. The sequence is that of tRNA-2-methylthio-N(6)-dimethylallyladenosine synthase from Bacillus subtilis (strain 168).